Here is a 553-residue protein sequence, read N- to C-terminus: Glycerol kinase 2 (553 aa).

T20 contributes to the substrate binding site. ATP is bound at residue R24. Substrate-binding residues include R94, Y148, and D259. ATP is bound by residues T281, G326, and 427-431 (GMTNN). A helical transmembrane segment spans residues 526–546 (IFSSMPLGFFIVSSMVMLIGA).

The protein belongs to the FGGY kinase family. Interacts with ARMC12 and PLD6.

The protein localises to the mitochondrion outer membrane. It localises to the cytoplasm. It catalyses the reaction glycerol + ATP = sn-glycerol 3-phosphate + ADP + H(+). It participates in polyol metabolism; glycerol degradation via glycerol kinase pathway; sn-glycerol 3-phosphate from glycerol: step 1/1. Functionally, key enzyme in the regulation of glycerol uptake and metabolism. Essential for male fertility and sperm mitochondrial sheath formation. Required for proper arrangement of crescent-like mitochondria to form the mitochondrial sheath during spermatogenesis. Can induce mitochondrial clustering through interactions with PLD6 and up-regulation of phosphatidic acid synthesis in the mitochondria. The protein is Glycerol kinase 2 (GK2) of Macaca fascicularis (Crab-eating macaque).